Reading from the N-terminus, the 293-residue chain is Cytidine deaminase (293 aa).

CMP/dCMP-type deaminase domains are found at residues 47–166 (DDRA…FGPA) and 186–293 (VSDD…YQAV). Residue 88-90 (NME) participates in substrate binding. His101 provides a ligand contact to Zn(2+). The active-site Proton donor is Glu103. Positions 128 and 131 each coordinate Zn(2+).

Belongs to the cytidine and deoxycytidylate deaminase family. Homodimer. It depends on Zn(2+) as a cofactor.

The enzyme catalyses cytidine + H2O + H(+) = uridine + NH4(+). The catalysed reaction is 2'-deoxycytidine + H2O + H(+) = 2'-deoxyuridine + NH4(+). Its function is as follows. This enzyme scavenges exogenous and endogenous cytidine and 2'-deoxycytidine for UMP synthesis. This is Cytidine deaminase from Aeromonas hydrophila subsp. hydrophila (strain ATCC 7966 / DSM 30187 / BCRC 13018 / CCUG 14551 / JCM 1027 / KCTC 2358 / NCIMB 9240 / NCTC 8049).